The primary structure comprises 310 residues: UPF0761 membrane protein VSAL_I2938 (310 aa).

A run of 6 helical transmembrane segments spans residues 34–54 (YMAY…LSVL), 97–117 (MTAV…SAID), 136–156 (FSLY…SLAA), 178–198 (LLGW…YLLV), 207–227 (HALV…VGFA), and 242–262 (ALAA…IVLI).

The protein belongs to the UPF0761 family.

The protein resides in the cell inner membrane. The polypeptide is UPF0761 membrane protein VSAL_I2938 (Aliivibrio salmonicida (strain LFI1238) (Vibrio salmonicida (strain LFI1238))).